The following is a 238-amino-acid chain: Thymidine kinase, cytosolic (238 aa).

An N-acetylserine modification is found at Ser2. Phosphoserine is present on residues Ser2 and Ser13. ATP-binding positions include 26 to 33 (GPMFSGKS), 58 to 60 (DTR), and 97 to 100 (DEGQ). Glu98 acts as the Proton acceptor in catalysis. Residue Phe128 coordinates substrate. The Zn(2+) site is built by Cys153 and Cys156. Substrate-binding positions include 172–176 (VEVIG) and Tyr181. Zn(2+)-binding residues include Cys185 and Cys188. The KEN box motif lies at 206–208 (KEN). Residue Ser235 is modified to Phosphoserine.

This sequence belongs to the thymidine kinase family. In terms of assembly, homotetramer. Tetramerization from dimerization is induced by ATP and increases catalytic efficiency due to a high affinity for thymidine. Tetramerization is inhibited by phosphorylation at Ser-13. Interacts (via the KEN box) with FZR1. Post-translationally, phosphorylated on Ser-13 in mitosis. Phosphorylation of Ser-13 by CDK1 during mitosis reduces homotetramerization and catalytic efficiency when DNA replication is complete and intracellular TK1 is still present at a high level. In terms of processing, polyubiquitinated. Postmitosis, ubiquitination leads to proteasomal degradation. The KEN box sequence located at the C-terminal region targets for degradation by the anaphase promoting complex (APC/C) activated and rate-limited by FZR1.

It is found in the cytoplasm. The catalysed reaction is thymidine + ATP = dTMP + ADP + H(+). Functionally, cell-cycle-regulated enzyme of importance in nucleotide metabolism. Catalyzes the first enzymatic step in the salvage pathway converting thymidine into thymidine monophosphate. Transcriptional regulation limits expression to the S phase of the cell cycle and transient expression coincides with the oscillation in the intracellular dTTP concentration. This chain is Thymidine kinase, cytosolic (TK1), found in Bos taurus (Bovine).